Consider the following 180-residue polypeptide: Shikimate kinase (180 aa).

Residue 14-19 participates in ATP binding; sequence GAGKTC. Residue T18 coordinates Mg(2+). The substrate site is built by D36, R60, and G82. Position 120 (R120) interacts with ATP. Substrate is bound at residue R139.

It belongs to the shikimate kinase family. Monomer. Mg(2+) is required as a cofactor.

The protein localises to the cytoplasm. It catalyses the reaction shikimate + ATP = 3-phosphoshikimate + ADP + H(+). Its pathway is metabolic intermediate biosynthesis; chorismate biosynthesis; chorismate from D-erythrose 4-phosphate and phosphoenolpyruvate: step 5/7. Catalyzes the specific phosphorylation of the 3-hydroxyl group of shikimic acid using ATP as a cosubstrate. The protein is Shikimate kinase of Stenotrophomonas maltophilia (strain K279a).